We begin with the raw amino-acid sequence, 372 residues long: Cell division protein FtsZ 1 (372 aa).

GTP-binding positions include 51-55 (GAGCN), 138-140 (GTG), E169, R173, and D216. A disordered region spans residues 351–372 (QEETPEPSEEEVPPVKIDIPEL). A compositionally biased stretch (acidic residues) spans 353–362 (ETPEPSEEEV).

This sequence belongs to the FtsZ family. In terms of assembly, homodimer. Polymerizes to form a dynamic ring structure in a strictly GTP-dependent manner. Interacts directly with several other division proteins.

Its subcellular location is the cytoplasm. Essential cell division protein that forms a contractile ring structure (Z ring) at the future cell division site. The regulation of the ring assembly controls the timing and the location of cell division. One of the functions of the FtsZ ring is to recruit other cell division proteins to the septum to produce a new cell wall between the dividing cells. Binds GTP and shows GTPase activity. The chain is Cell division protein FtsZ 1 from Pyrococcus abyssi (strain GE5 / Orsay).